Reading from the N-terminus, the 297-residue chain is Undecaprenyl-diphosphatase 3 (297 aa).

Helical transmembrane passes span 39–59 (PGAA…LIYF), 89–109 (WLVL…QDAI), 118–138 (LIAT…WYAS), 203–223 (FLLA…SIGG), 237–257 (PTIV…AWFL), and 268–288 (FVLY…GGAI).

It belongs to the UppP family.

It is found in the cell membrane. The catalysed reaction is di-trans,octa-cis-undecaprenyl diphosphate + H2O = di-trans,octa-cis-undecaprenyl phosphate + phosphate + H(+). Its function is as follows. Catalyzes the dephosphorylation of undecaprenyl diphosphate (UPP). Confers resistance to bacitracin. In Frankia alni (strain DSM 45986 / CECT 9034 / ACN14a), this protein is Undecaprenyl-diphosphatase 3.